The chain runs to 101 residues: Small ribosomal subunit protein bS18c (101 aa).

Basic residues predominate over residues 1 to 19; that stretch reads MDKSKRPFRKSKRSFRRRL. The interval 1–23 is disordered; the sequence is MDKSKRPFRKSKRSFRRRLPPIG.

The protein belongs to the bacterial ribosomal protein bS18 family. Part of the 30S ribosomal subunit.

The protein resides in the plastid. It is found in the chloroplast. In Ceratophyllum demersum (Rigid hornwort), this protein is Small ribosomal subunit protein bS18c.